Here is a 243-residue protein sequence, read N- to C-terminus: Bidirectional sugar transporter SWEET2a (243 aa).

At 1–23 (MDWAAPALTSFVADSSYRHLCCY) the chain is on the extracellular side. The helical transmembrane segment at 24–44 (GAGIAGNVFAFVLFISPLPTF) threads the bilayer. Residues 24–111 (GAGIAGNVFA…AVFIAFADAK (88 aa)) form the MtN3/slv 1 domain. Topologically, residues 45-57 (KRIVRNGSTEQFS) are cytoplasmic. A helical membrane pass occupies residues 58-80 (AMPYIYSLLNCLICMWYGLPFVS). The Extracellular portion of the chain corresponds to 81-89 (YGVVLVATV). Residues 90–110 (NSIGAVFQLAYTAVFIAFADA) traverse the membrane as a helical segment. Residues 111-117 (KQRLKVS) lie on the Cytoplasmic side of the membrane. The chain crosses the membrane as a helical span at residues 118 to 138 (ALLAAVFVVFGLIVFVSLALL). Residues 139–145 (DHPTRQM) are Extracellular-facing. The chain crosses the membrane as a helical span at residues 146–166 (FVGYLSVASLIFMFASPLSII). The MtN3/slv 2 domain occupies 147–230 (VGYLSVASLI…VLYAYFRKGS (84 aa)). Residues 167–179 (NLVIRTKSVEYMP) are Cytoplasmic-facing. A helical transmembrane segment spans residues 180-200 (FYLSLSMFLMSASFFGYGVLL). The Extracellular portion of the chain corresponds to 201–202 (ND). Residues 203 to 223 (FFIYIPNGIGTILGIIQLVLY) traverse the membrane as a helical segment. Residues 224 to 243 (AYFRKGSSEEAKLPLLVTHT) are Cytoplasmic-facing.

This sequence belongs to the SWEET sugar transporter family. In terms of assembly, forms homooligomers and/or heterooligomers.

It is found in the cell membrane. Functionally, mediates both low-affinity uptake and efflux of sugar across the plasma membrane. This Sorghum bicolor (Sorghum) protein is Bidirectional sugar transporter SWEET2a.